The chain runs to 79 residues: Dermaseptin-S8 (79 aa).

The N-terminal stretch at 1–22 (MDILKKSLFLVLFLGLVSLSIC) is a signal peptide. The propeptide occupies 23-45 (EEEKRENEDEEKQEDDEQSEMKR). Position 76 is a glutamine amide (Gln-76). The propeptide occupies 78 to 79 (AQ).

It belongs to the frog skin active peptide (FSAP) family. Dermaseptin subfamily. As to expression, expressed by the skin glands.

The protein resides in the secreted. Its function is as follows. Potent antimicrobial peptide with activity against bacteria, fungi and protozoa. Probably acts by disturbing membrane functions with its amphipathic structure. In Phyllomedusa sauvagei (Sauvage's leaf frog), this protein is Dermaseptin-S8.